The sequence spans 113 residues: U11-theraphotoxin-Hhn1a (113 aa).

The signal sequence occupies residues 1 to 21; it reads MNTVRVTFLLVFVLAVSLGQA. The propeptide occupies 22–74; it reads DKDENRMEMQEKTEQGNSYLDFAENLPLQKLEELEAKLLEEDSEESRNSRQKR. A compositionally biased stretch (basic and acidic residues) spans 60-69; it reads LEEDSEESRN. The interval 60–83 is disordered; that stretch reads LEEDSEESRNSRQKRCIGEGVPCD. 3 disulfides stabilise this stretch: Cys-75-Cys-90, Cys-82-Cys-95, and Cys-89-Cys-110.

It belongs to the neurotoxin 14 (magi-1) family. 01 (HNTX-16) subfamily. As to expression, expressed by the venom gland.

It localises to the secreted. Functionally, probable ion channel inhibitor. This chain is U11-theraphotoxin-Hhn1a, found in Cyriopagopus hainanus (Chinese bird spider).